The primary structure comprises 203 residues: Glycerol-3-phosphate acyltransferase (203 aa).

Helical transmembrane passes span threonine 13–threonine 33, leucine 62–serine 82, alanine 88–phenylalanine 108, isoleucine 118–alanine 138, and isoleucine 159–isoleucine 179.

Belongs to the PlsY family. Probably interacts with PlsX.

The protein localises to the cell inner membrane. The catalysed reaction is an acyl phosphate + sn-glycerol 3-phosphate = a 1-acyl-sn-glycero-3-phosphate + phosphate. It functions in the pathway lipid metabolism; phospholipid metabolism. Its function is as follows. Catalyzes the transfer of an acyl group from acyl-phosphate (acyl-PO(4)) to glycerol-3-phosphate (G3P) to form lysophosphatidic acid (LPA). This enzyme utilizes acyl-phosphate as fatty acyl donor, but not acyl-CoA or acyl-ACP. The polypeptide is Glycerol-3-phosphate acyltransferase (Rhizobium meliloti (strain 1021) (Ensifer meliloti)).